A 191-amino-acid polypeptide reads, in one-letter code: MAAPRGRAAPWTTALLLLLTSQILSPGSCADEEEVPEEWVLLHVVQGQIGAGNYSYLRLNHEGKIVLRMRSLKGDADLYVSASSLHPSFDDYELQSATCGPDAVSIPAHFRRPVGIGVYGHPSHLESEFEMKVYYDGTVEQHPFGEAAYPADGADAGQKHARAPEDASQEEESVLWTILISVLKLVLEILF.

The N-terminal stretch at 1–30 (MAAPRGRAAPWTTALLLLLTSQILSPGSCA) is a signal peptide. A glycan (N-linked (GlcNAc...) asparagine) is linked at asparagine 53.

It belongs to the UPF0669 family.

It is found in the secreted. May be involved in induction of apoptosis in CD4(+) T-cells, but not CD8(+) T-cells or hepatocytes. The chain is UPF0669 protein C6orf120 homolog from Macaca fascicularis (Crab-eating macaque).